The primary structure comprises 623 residues: Protein Atg16l2 (623 aa).

Over residues 64-79 (PKDAISTRHEDWREEV) the composition is skewed to basic and acidic residues. Residues 64–93 (PKDAISTRHEDWREEVSGTGPDQVSSPASL) form a disordered region. A coiled-coil region spans residues 116–229 (VKKSAALDTL…ANQALVSQEL (114 aa)). WD repeat units follow at residues 338–377 (AHLSEVNAVCFGPNSSLLATGGADRLIHLWNVVGGRLEAN), 382–421 (GAGGSITSVDFDPSGSQVLAATYNQAAQLWKVGETQSKET), 424–458 (GHKDKVTAAKFKLTRHQAVTGSRDRTVKEWDLGRA), 459–502 (YCSR…CIQV), 504–543 (PVQGRVTSLHLSYDQLHLLSCSRDNTLKVIDLRISNIRQV), 550–589 (KCSSDWTKAVFSPDRSYALAGSSNGDLYIWDVNTGKLETS), and 593–623 (PHCTAVNAVAWCFSGNHVVSVDQGRKVVLWH).

This sequence belongs to the WD repeat ATG16 family. Homooligomer. Heterooligomer with ATG16L2. Interacts with ATG5. Self-oligomerizes to form a 800-kDa complex composed of ATG12-ATG5 and ATG16L2. Interacts with RAB33B. Widely expressed.

The protein resides in the cytoplasm. Its subcellular location is the cytosol. Its function is as follows. May play a role in regulating epithelial homeostasis in an ATG16L1-dependent manner. This is Protein Atg16l2 (Atg16l2) from Mus musculus (Mouse).